The sequence spans 109 residues: Lipoprotein BsmA (109 aa).

An N-terminal signal peptide occupies residues 1–24; it reads MVSRKRNSVIYRFASLLLVLMLSA. Cysteine 25 is lipidated: N-palmitoyl cysteine. Cysteine 25 carries the S-diacylglycerol cysteine lipid modification.

The protein belongs to the BhsA/McbA family.

It localises to the cell membrane. Functionally, involved in protection of biofilms against oxidative stress. The chain is Lipoprotein BsmA (bsmA) from Escherichia coli (strain K12).